Consider the following 403-residue polypeptide: Protein STRICTOSIDINE SYNTHASE-LIKE 13 (403 aa).

Residues Met1–Gly42 form the signal peptide. Residues Asn66 and Asn206 are each glycosylated (N-linked (GlcNAc...) asparagine).

It belongs to the strictosidine synthase family.

The protein localises to the vacuole. In terms of biological role, required for the exine formation during pollen development. The polypeptide is Protein STRICTOSIDINE SYNTHASE-LIKE 13 (Arabidopsis thaliana (Mouse-ear cress)).